A 484-amino-acid polypeptide reads, in one-letter code: Hexokinase-2 (484 aa).

Positions 21-467 constitute a Hexokinase domain; it reads PQLLEALKPI…SGVGAAVIAA (447 aa). The interval 75–208 is hexokinase small subdomain; it reads TGKETGSYLA…GVPIDVVALI (134 aa). A hexokinase large subdomain region spans residues 209–456; sequence NDTTGTLVAS…DPIIIVPAED (248 aa).

Belongs to the hexokinase family. In terms of assembly, monomer.

It localises to the cytoplasm. The enzyme catalyses a D-hexose + ATP = a D-hexose 6-phosphate + ADP + H(+). The catalysed reaction is D-fructose + ATP = D-fructose 6-phosphate + ADP + H(+). It catalyses the reaction D-glucose + ATP = D-glucose 6-phosphate + ADP + H(+). It participates in carbohydrate metabolism; hexose metabolism. The protein operates within carbohydrate degradation; glycolysis; D-glyceraldehyde 3-phosphate and glycerone phosphate from D-glucose: step 1/4. In terms of biological role, catalyzes the phosphorylation of hexose, such as D-glucose and D-fructose, to hexose 6-phosphate (D-glucose 6-phosphate and D-fructose 6-phosphate, respectively). Mediates the initial step of glycolysis by catalyzing phosphorylation of D-glucose to D-glucose 6-phosphate. The chain is Hexokinase-2 (HXK2) from Candida albicans (strain SC5314 / ATCC MYA-2876) (Yeast).